The sequence spans 335 residues: Auxin-responsive protein IAA6 (335 aa).

The EAR-like (transcriptional repression) motif lies at 51–55; the sequence is LKLGL. 3 disordered regions span residues 81–102, 143–180, and 188–207; these read LSFF…GAKR, KKGC…VGWP, and NLAS…DNAN. The 105-residue stretch at 217 to 321 folds into the PB1 domain; that stretch reads NPLVKINMDG…TAKRLRVLRS (105 aa).

This sequence belongs to the Aux/IAA family. In terms of assembly, homodimers and heterodimers. In terms of tissue distribution, highly expressed in roots. Expressed in shoots and flowers.

The protein localises to the nucleus. In terms of biological role, aux/IAA proteins are short-lived transcriptional factors that function as repressors of early auxin response genes at low auxin concentrations. The polypeptide is Auxin-responsive protein IAA6 (IAA6) (Oryza sativa subsp. japonica (Rice)).